The following is a 1574-amino-acid chain: RNA2 polyprotein (1574 aa).

Residues 361 to 422 are a coiled coil; the sequence is ERVKAFSSHH…ERLRAAKEDR (62 aa). Disordered stretches follow at residues 557–579 and 863–916; these read PPPI…ETPG and RSAT…RGYT.

In terms of processing, specific enzymatic cleavages by RNA1 encoded picornain 3C-like protease in vivo yield mature proteins.

It is found in the host cell junction. Its subcellular location is the host plasmodesma. The protein localises to the virion. In terms of biological role, transports viral genome to neighboring plant cells directly through plasmosdesmata, without any budding. The movement protein allows efficient cell to cell propagation, by bypassing the host cell wall barrier. Acts by forming a tubular structure at the host plasmodesmata, enlarging it enough to allow free passage of virion capsids. Capsid proteins form a capsid enclosing the viral positive strand RNA genome. Together they form an icosahedral capsid pseudo T=3 with a diameter of approximately 30 nm (Potential). The sequence is that of RNA2 polyprotein from Citrus unshiu (Satsuma mandarin).